The following is a 346-amino-acid chain: Pheromone receptor 2 (346 aa).

The next 7 helical transmembrane spans lie at 8–28, 34–54, 71–94, 115–135, 160–180, 219–239, and 270–290; these read VSFG…CLIH, IGVL…GINA, LSAI…LQRL, LIDF…FFIV, FIYH…AVLV, VLVS…GGLL, and LSIL…FFGL.

Belongs to the G-protein coupled receptor 4 family.

The protein resides in the membrane. Functionally, receptor for the A1 pheromone, a prenylated mating factor. The protein is Pheromone receptor 2 (PRA2) of Mycosarcoma maydis (Corn smut fungus).